Here is a 409-residue protein sequence, read N- to C-terminus: Arginine biosynthesis bifunctional protein ArgJ (409 aa).

Residues threonine 156, lysine 182, threonine 193, glutamate 280, asparagine 404, and serine 409 each coordinate substrate. Threonine 193 acts as the Nucleophile in catalysis.

Belongs to the ArgJ family. As to quaternary structure, heterotetramer of two alpha and two beta chains.

It is found in the cytoplasm. It catalyses the reaction N(2)-acetyl-L-ornithine + L-glutamate = N-acetyl-L-glutamate + L-ornithine. The catalysed reaction is L-glutamate + acetyl-CoA = N-acetyl-L-glutamate + CoA + H(+). Its pathway is amino-acid biosynthesis; L-arginine biosynthesis; L-ornithine and N-acetyl-L-glutamate from L-glutamate and N(2)-acetyl-L-ornithine (cyclic): step 1/1. The protein operates within amino-acid biosynthesis; L-arginine biosynthesis; N(2)-acetyl-L-ornithine from L-glutamate: step 1/4. In terms of biological role, catalyzes two activities which are involved in the cyclic version of arginine biosynthesis: the synthesis of N-acetylglutamate from glutamate and acetyl-CoA as the acetyl donor, and of ornithine by transacetylation between N(2)-acetylornithine and glutamate. This Ralstonia nicotianae (strain ATCC BAA-1114 / GMI1000) (Ralstonia solanacearum) protein is Arginine biosynthesis bifunctional protein ArgJ.